Consider the following 406-residue polypeptide: Aspartokinase (406 aa).

Positions 342–406 (IIGHGIKNDL…LLKISETGHC (65 aa)) constitute an ACT domain.

This sequence belongs to the aspartokinase family.

The catalysed reaction is L-aspartate + ATP = 4-phospho-L-aspartate + ADP. The protein operates within amino-acid biosynthesis; L-lysine biosynthesis via DAP pathway; (S)-tetrahydrodipicolinate from L-aspartate: step 1/4. Its pathway is amino-acid biosynthesis; L-methionine biosynthesis via de novo pathway; L-homoserine from L-aspartate: step 1/3. It functions in the pathway amino-acid biosynthesis; L-threonine biosynthesis; L-threonine from L-aspartate: step 1/5. The polypeptide is Aspartokinase (lysC) (Rickettsia bellii (strain RML369-C)).